Reading from the N-terminus, the 123-residue chain is MRKPQRGYARQDRVKEQIMRELAELVRTGLKDPRAGFITVNEVEVTRDYSHATVFYTVLNQDAREITEEVLEHARGHLRSELAKRIKLFKIPELHFKYDESLERGLNLSALIDQVAAEKPVED.

The protein belongs to the RbfA family. Monomer. Binds 30S ribosomal subunits, but not 50S ribosomal subunits or 70S ribosomes.

It localises to the cytoplasm. Functionally, one of several proteins that assist in the late maturation steps of the functional core of the 30S ribosomal subunit. Associates with free 30S ribosomal subunits (but not with 30S subunits that are part of 70S ribosomes or polysomes). Required for efficient processing of 16S rRNA. May interact with the 5'-terminal helix region of 16S rRNA. This chain is Ribosome-binding factor A, found in Neisseria meningitidis serogroup A / serotype 4A (strain DSM 15465 / Z2491).